A 238-amino-acid chain; its full sequence is Cysteine-rich venom protein pseudecin (238 aa).

The signal sequence occupies residues 1–19 (MIAFIVLLSLAAVLQQSSG). The propeptide occupies 20-28 (TVDFASESS). The SCP domain maps to 38-164 (VDKHNALRRS…SSKYLYVCQY (127 aa)). Zn(2+)-binding residues include Thr51 and Ser106. 8 disulfide bridges follow: Cys75–Cys153, Cys92–Cys165, Cys148–Cys162, Cys184–Cys191, Cys187–Cys196, Cys200–Cys233, Cys209–Cys227, and Cys218–Cys231. A ShKT domain is found at 200–233 (CNYNNDFSNCKSLAKKSKCQTEWIKKKCPASCFC).

As to expression, expressed by the venom gland.

The protein resides in the secreted. Functionally, blocks olfactory (CNGA2) and retinal (CNGA1) CNG channel currents. Is really less potent that Pseudechetoxin. Does not affect neither depolarization- nor caffeine-induced contraction of smooth muscle. This Pseudechis porphyriacus (Red-bellied black snake) protein is Cysteine-rich venom protein pseudecin.